The following is a 147-amino-acid chain: Ras-related protein RabK2 (147 aa).

GTP is bound by residues 11–15 (NTHGS) and 63–66 (TKSD). C145 carries the S-geranylgeranyl cysteine lipid modification.

The protein belongs to the small GTPase superfamily. Rab family.

It is found in the cell membrane. In Dictyostelium discoideum (Social amoeba), this protein is Ras-related protein RabK2 (rabK2).